The following is a 483-amino-acid chain: ATP synthase subunit beta (483 aa).

Glycine 169–threonine 176 provides a ligand contact to ATP.

The protein belongs to the ATPase alpha/beta chains family. In terms of assembly, F-type ATPases have 2 components, CF(1) - the catalytic core - and CF(0) - the membrane proton channel. CF(1) has five subunits: alpha(3), beta(3), gamma(1), delta(1), epsilon(1). CF(0) has three main subunits: a(1), b(2) and c(9-12). The alpha and beta chains form an alternating ring which encloses part of the gamma chain. CF(1) is attached to CF(0) by a central stalk formed by the gamma and epsilon chains, while a peripheral stalk is formed by the delta and b chains.

The protein resides in the cell membrane. The catalysed reaction is ATP + H2O + 4 H(+)(in) = ADP + phosphate + 5 H(+)(out). Its function is as follows. Produces ATP from ADP in the presence of a proton gradient across the membrane. The catalytic sites are hosted primarily by the beta subunits. The sequence is that of ATP synthase subunit beta from Rhodococcus erythropolis (strain PR4 / NBRC 100887).